We begin with the raw amino-acid sequence, 146 residues long: MAMSLCPLLLVFVLGLGLTPPSLAQDDSRYRQFLTKHYDANPRGRNDRYCESMMVRRHLTTPCKDTNTFIHGSKSSIKAICGNKNGNPYGETLRISKTRFQVTTCKHAGGSPRPPCRYRATPGFRSIVIACENGLPVHFDESFFRP.

A signal peptide spans 1–24 (MAMSLCPLLLVFVLGLGLTPPSLA). Gln25 is modified (pyrrolidone carboxylic acid). His37 acts as the Proton acceptor in catalysis. Arg45 is a tRNA binding site. 3 cysteine pairs are disulfide-bonded: Cys50–Cys105, Cys63–Cys116, and Cys81–Cys131. Residues 55-59 (VRRHL) carry the Nucleolar localization signal motif. TRNA is bound by residues Cys105 and Ile127. Residue His138 is the Proton donor of the active site.

This sequence belongs to the pancreatic ribonuclease family. Homodimer. Interacts with RNH1; inhibiting ANG ribonuclease activity. Interacts with PCNA.

It localises to the secreted. Its subcellular location is the nucleus. The protein localises to the nucleolus. The protein resides in the cytoplasm. It is found in the stress granule. Its activity is regulated as follows. Has weak tRNA ribonuclease activity by itself due to partial autoinhibition by its C-terminus, which folds into a short alpha-helix that partially occludes the substrate-binding site. In absence of stress, the ribonuclease activity is inhibited by RNH1 in the cytoplasm. In response to stress, dissociates from RNH1 in the cytoplasm and associates with cytoplasmic ribosomes with vacant A-sites: ribosomes directly activate the tRNA ribonuclease activity of ANG by refolding the C-terminal alpha-helix. In response to stress, the angiogenic activity of ANG is inhibited by RNH1 in the nucleus. In terms of biological role, secreted ribonuclease that can either promote or restrict cell proliferation of target cells, depending on the context. Endocytosed in target cells via its receptor PLXNB2 and translocates to the cytoplasm or nucleus. Under stress conditions, localizes to the cytoplasm and promotes the assembly of stress granules (SGs): specifically cleaves a subset of tRNAs within anticodon loops to produce tRNA-derived stress-induced fragments (tiRNAs), resulting in translation repression and inhibition of cell proliferation. tiRNas also prevent formation of apoptosome, thereby promoting cell survival. Preferentially cleaves RNAs between a pyrimidine and an adenosine residue, suggesting that it cleaves the anticodon loop of tRNA(Ala) (32-UUAGCAU-38) after positions 33 and 36. Cleaves a subset of tRNAs, including tRNA(Ala), tRNA(Glu), tRNA(Gly), tRNA(Lys), tRNA(Val), tRNA(His), tRNA(Asp) and tRNA(Sec). Under growth conditions and in differentiated cells, translocates to the nucleus and stimulates ribosomal RNA (rRNA) transcription, including that containing the initiation site sequences of 45S rRNA, thereby promoting cell growth and proliferation. Angiogenin induces vascularization of normal and malignant tissues via its ability to promote rRNA transcription. Involved in hematopoietic stem and progenitor cell (HSPC) growth and survival by promoting rRNA transcription in growth conditions and inhibiting translation in response to stress, respectively. Mediates the crosstalk between myeloid and intestinal epithelial cells to protect the intestinal epithelial barrier integrity: secreted by myeloid cells and promotes intestinal epithelial cells proliferation and survival. Also mediates osteoclast-endothelial cell crosstalk in growing bone: produced by osteoclasts and protects the neighboring vascular cells against senescence by promoting rRNA transcription. The sequence is that of Angiogenin (ANG) from Equus caballus (Horse).